The chain runs to 373 residues: NADPH-dependent 3-keto-steroid reductase Hsd3b5 (373 aa).

Residues 10–15 (GAGGFL), tyrosine 155, and lysine 159 contribute to the NADP(+) site. Lysine 159 acts as the Proton donor in catalysis. Residues 288–308 (LPLLYWLAFLLETVSFLLRPF) form a helical membrane-spanning segment. Position 350 is an N6-acetyllysine (lysine 350).

It belongs to the 3-beta-HSD family. Expressed predominantly in male liver.

The protein localises to the endoplasmic reticulum membrane. It is found in the mitochondrion membrane. The catalysed reaction is a 3beta-hydroxysteroid + NADP(+) = a 3-oxosteroid + NADPH + H(+). It catalyses the reaction 5alpha-androstane-3beta,17beta-diol + NADP(+) = 17beta-hydroxy-5alpha-androstan-3-one + NADPH + H(+). It carries out the reaction 3beta-hydroxy-5alpha-androstan-17-one + NADP(+) = 5alpha-androstan-3,17-dione + NADPH + H(+). It functions in the pathway steroid metabolism. In terms of biological role, responsible for the reduction of the oxo group on the C-3 of 5alpha-androstane steroids. Catalyzes the conversion of dihydrotestosterone to its inactive form 5alpha-androstanediol, that does not bind androgen receptor/AR. Also converts androstanedione, a precursor of testosterone and estrone, to epiandrosterone. Does not function as an isomerase. In Rattus norvegicus (Rat), this protein is NADPH-dependent 3-keto-steroid reductase Hsd3b5.